We begin with the raw amino-acid sequence, 387 residues long: Omega-6 fatty acid desaturase, endoplasmic reticulum isozyme 1 (387 aa).

Helical transmembrane passes span 54-74 (LLTS…FYIA) and 87-107 (LIAW…VWVI). The short motif at 109-113 (HECGH) is the Histidine box-1 element. A helical membrane pass occupies residues 121–141 (WVDDVVGLTLHSTLLVPYFSW). The Histidine box-2 signature appears at 145–149 (HRRHH). Helical transmembrane passes span 183-203 (AVSL…FNVS), 227-247 (LLIY…YRVA), and 251-271 (GLVW…GFLV). The Histidine box-3 signature appears at 319 to 323 (HVAHH).

It belongs to the fatty acid desaturase type 1 family. Strongly expressed in developing seeds.

Its subcellular location is the endoplasmic reticulum membrane. It functions in the pathway lipid metabolism; polyunsaturated fatty acid biosynthesis. ER (microsomal) omega-6 fatty acid desaturase introduces the second double bond in the biosynthesis of 18:3 fatty acids, important constituents of plant membranes. It is thought to use cytochrome b5 as an electron donor and to act on fatty acids esterified to phosphatidylcholine and, possibly, other phospholipids. This Glycine max (Soybean) protein is Omega-6 fatty acid desaturase, endoplasmic reticulum isozyme 1 (FAD2-1).